The following is a 508-amino-acid chain: Maturase K (508 aa).

It belongs to the intron maturase 2 family. MatK subfamily.

It localises to the plastid. It is found in the chloroplast. Functionally, usually encoded in the trnK tRNA gene intron. Probably assists in splicing its own and other chloroplast group II introns. This chain is Maturase K, found in Gordonia lasianthus (Loblolly bay).